Here is a 724-residue protein sequence, read N- to C-terminus: Ribosomal RNA processing protein 1 homolog B (724 aa).

Positions Asn-331–Leu-576 are disordered. A phosphoserine mark is found at Ser-336 and Ser-370. The span at His-373–His-386 shows a compositional bias: basic residues. Ser-432 and Ser-438 each carry phosphoserine. Over residues His-448 to Ala-461 the composition is skewed to basic residues. A compositionally biased stretch (low complexity) spans Ser-483–Ser-496. The residue at position 494 (Ser-494) is a Phosphoserine. Polar residues-rich tracts occupy residues Asp-513–Ser-528 and Lys-548–Pro-564. Lys-618 carries the post-translational modification N6-acetyllysine. Residues Ala-625–Lys-649 are disordered. Residues Leu-640–Lys-649 show a composition bias toward polar residues. Residues Ser-668 and Ser-672 each carry the phosphoserine modification. Arg-678 is subject to Citrulline. The disordered stretch occupies residues Pro-687–Phe-724. Thr-694 is modified (phosphothreonine). Positions Thr-694 to Pro-706 are enriched in low complexity. A phosphoserine mark is found at Ser-698 and Ser-701.

This sequence belongs to the RRP1 family. Interacts with the transcriptional activator E2F1. Interacts with serine/threonine-protein phosphatase PP1 subunits PPP1CB and PPP1CC but not with PPP1CA. Interacts with 60S ribosomal proteins RPL5 and RPL27, ribosomal processing protein RRP1/NNP1 and other nucleolar proteins including NOP2/NOL1 and FBL. Also interacts with nucleolar protein NPM1/B23. Interacts with splicing factor SRSF1 and LUC7L3/CROP. Interacts with GTPase activator SIPA1. Interacts with H1-10, NCL, PARP1, TRIM28 and YBX3. Post-translationally, citrullinated by PADI4.

It is found in the nucleus. It localises to the nucleolus. The protein resides in the nucleoplasm. The protein localises to the chromosome. In terms of biological role, positively regulates DNA damage-induced apoptosis by acting as a transcriptional coactivator of proapoptotic target genes of the transcriptional activator E2F1. Likely to play a role in ribosome biogenesis by targeting serine/threonine protein phosphatase PP1 to the nucleolus. Involved in regulation of mRNA splicing. Inhibits SIPA1 GTPase activity. Involved in regulating expression of extracellular matrix genes. Associates with chromatin and may play a role in modulating chromatin structure. In Mus musculus (Mouse), this protein is Ribosomal RNA processing protein 1 homolog B (Rrp1b).